We begin with the raw amino-acid sequence, 427 residues long: Bifunctional enzyme MtnB/MtnX (427 aa).

Residues 1 to 221 (MRKPLIICDF…LEETAEVKEW (221 aa)) are HK-MTPenyl-1-P phosphatase. The segment at 222–427 (MSEQKRQELA…KLKALQAYHV (206 aa)) is MTRu-1-P dehydratase. Zn(2+)-binding residues include His-317 and His-319.

In the N-terminal section; belongs to the HAD-like hydrolase superfamily. MtnX family. The protein in the C-terminal section; belongs to the aldolase class II family. MtnB subfamily. As to quaternary structure, homotetramer. Zn(2+) is required as a cofactor.

It carries out the reaction 5-(methylsulfanyl)-D-ribulose 1-phosphate = 5-methylsulfanyl-2,3-dioxopentyl phosphate + H2O. It catalyses the reaction 2-hydroxy-5-methylsulfanyl-3-oxopent-1-enyl phosphate + H2O = 1,2-dihydroxy-5-(methylsulfanyl)pent-1-en-3-one + phosphate. It participates in amino-acid biosynthesis; L-methionine biosynthesis via salvage pathway; L-methionine from S-methyl-5-thio-alpha-D-ribose 1-phosphate: step 2/6. It functions in the pathway amino-acid biosynthesis; L-methionine biosynthesis via salvage pathway; L-methionine from S-methyl-5-thio-alpha-D-ribose 1-phosphate: step 4/6. Functionally, catalyzes the dehydration of methylthioribulose-1-phosphate (MTRu-1-P) into 2,3-diketo-5-methylthiopentyl-1-phosphate (DK-MTP-1-P). Dephosphorylates 2-hydroxy-3-keto-5-methylthiopentenyl-1-phosphate (HK-MTPenyl-1-P) yielding 1,2-dihydroxy-3-keto-5-methylthiopentene (DHK-MTPene). The protein is Bifunctional enzyme MtnB/MtnX (mtnB/mtnX) of Bacillus licheniformis (strain ATCC 14580 / DSM 13 / JCM 2505 / CCUG 7422 / NBRC 12200 / NCIMB 9375 / NCTC 10341 / NRRL NRS-1264 / Gibson 46).